Consider the following 607-residue polypeptide: CRISPR-associated DNA-binding protein Cas12m (607 aa).

A wedge domain (WED-N) region spans residues 1–16 (MTRVTVQTAGVHYKWQ). The interval 17–189 (MPDQLTQQLR…QLRHHRWDGT (173 aa)) is recognition domain (REC). A roof in REC region spans residues 50–124 (WSSYPAVAAL…IASVRDEATE (75 aa)). Over residues 74–83 (ASTVKEEKSR) the composition is skewed to basic and acidic residues. The interval 74–94 (ASTVKEEKSRQRTKRPSHPAV) is disordered. The tract at residues 190–315 (GTISVQLQRQ…KIPDQGEVDE (126 aa)) is wedge domain (WED-C). Positions 316–559 (GPTIAVHLGW…TVSHTGLSRV (244 aa)) are ruvC-I. The ruvC insertion stretch occupies residues 391–452 (SIRDTLVAWL…EGADIAETLE (62 aa)). The interval 552-588 (SHTGLSRVHAACGHENPADDRYLMQPVLCDGCGRTYD) is target nucleic-acid binding (TNB). Residues His-560, Cys-563, Cys-580, and Cys-583 each contribute to the Zn(2+) site. A ruvC-II region spans residues 589–607 (TDLSATILMLQRASAATSN). Asp-590 contacts Mg(2+).

This sequence belongs to the CRISPR-associated DNA-binding protein Cas12m family. As to quaternary structure, binds crRNA and target dsDNA as a monomer. Mg(2+) serves as cofactor. Requires Zn(2+) as cofactor.

Functionally, CRISPR (clustered regularly interspaced short palindromic repeat), is an adaptive immune system that provides protection against mobile genetic elements (viruses, transposable elements and conjugative plasmids). CRISPR clusters contain sequences complementary to antecedent mobile elements and target invading nucleic acids. CRISPR clusters are transcribed and processed into CRISPR RNA (crRNA). Recognizes a short motif in the CRISPR repeat sequences (the 5' PAM or protospacer adjacent motif, 5'-TTN-3' in this organism) to help distinguish self versus nonself, as targets within the bacterial CRISPR locus do not have PAMs. Upon expression in E.coli as a CRISPR locus inhibits plasmid propagation when targeted to regions essential for plasmid propagation (replication origin and a selectable marker); inhibits expression of a non-selectable marker, probably at the transcriptional level. Protects E.coli against bacteriophage M13mp18, to a lesser extent against lambda and VpaE1 as well as phage T4 with hydroxymethyl or unmodified (but not glycosylated) cytosines. Preferentially binds to its associated crRNA. Cas12m-crRNA binds DNA in a PAM-dependent, crRNA-guided fashion. Binds a 20-bp crRNA-ss-target DNA heteroduplex, in a 52 nucleotide crRNA. No dsDNA, ssDNA or RNA nuclease activity is seen for the crRNA-Cas12m complex. Probably required for pre-crRNA processing to mature crRNA. The sequence is that of CRISPR-associated DNA-binding protein Cas12m from Gordonia otitidis (strain DSM 44809 / CCUG 52243 / JCM 12355 / NBRC 100426 / IFM 10032).